A 74-amino-acid polypeptide reads, in one-letter code: Complement C5a anaphylatoxin (74 aa).

Positions 15-44 (YAMLKKCCYDGAYRNDDETCEERAARIKIG) are involved in C5AR1 binding. Cystine bridges form between cysteine 21-cysteine 47, cysteine 22-cysteine 54, and cysteine 34-cysteine 55. Positions 21-55 (CCYDGAYRNDDETCEERAARIKIGPKCVKAFKDCC) constitute an Anaphylatoxin-like domain. The segment at 72–74 (LGR) is required for 90% of C5a activity; although Arg-74 is not essential.

It is found in the secreted. Functionally, mediator of local inflammatory process released following cleavage by C5 convertase. Acts by binding to its receptor (C5AR1 or C5AR2), activating G protein-coupled receptor signaling and inducing a variety of responses including intracellular calcium release, contraction of smooth muscle, increased vascular permeability, and histamine release from mast cells and basophilic leukocytes. C5a is also a potent chemokine which stimulates the locomotion of polymorphonuclear leukocytes and directs their migration toward sites of inflammation. The chain is Complement C5a anaphylatoxin (C5) from Sus scrofa (Pig).